The sequence spans 796 residues: Peroxisome proliferator-activated receptor gamma coactivator 1-alpha (796 aa).

Lys-77 carries the post-translational modification N6-acetyllysine. The segment at Pro-98–Glu-138 is disordered. Over residues Asp-114 to Pro-127 the composition is skewed to polar residues. An LXXLL motif motif is present at residues Leu-142–Leu-146. Residue Lys-144 is modified to N6-acetyllysine. Position 176 is a phosphothreonine; by AMPK (Thr-176). Lys-182 is modified (N6-acetyllysine). The segment at Tyr-211 to Asn-275 is disordered. The span at Asp-217–Ala-235 shows a compositional bias: basic and acidic residues. Positions Thr-242–Leu-258 are enriched in polar residues. Residues Lys-252, Lys-269, Lys-276, Lys-319, Lys-345, Lys-411, Lys-440, and Lys-449 each carry the N6-acetyllysine modification. Positions Gly-288–Ser-350 are disordered. An interaction with PPARG region spans residues Gly-291–Thr-337. Positions Glu-348–Arg-796 are mediates interaction with RNF34. Phosphoserine; by AMPK is present on Ser-537. Disordered stretches follow at residues Phe-541–Ser-597 and His-611–Lys-669. The span at Gln-561 to Cys-576 shows a compositional bias: basic residues. Low complexity predominate over residues Ser-577–Ser-597. The segment covering Ser-620–Arg-629 has biased composition (basic residues). Basic and acidic residues predominate over residues Pro-630–Lys-669. The RRM domain occupies Arg-675–Arg-751. 2 positions are modified to N6-acetyllysine: Lys-756 and Lys-777.

As to quaternary structure, homooligomer. Interacts with MYBBP1A; inhibits MYBBP1A transcriptional activation. Interacts with PRDM16, LPIN1 and PML. Interacts (via LXXLL motif) with RORA and RORC (via AF-2 motif); activates RORA and RORC transcriptional activation. Interacts with LRPPRC. Interacts with FOXO1. Interacts with NR5A2. In terms of processing, phosphorylation by AMPK in skeletal muscle increases activation of its own promoter. Phosphorylated by CLK2. Heavily acetylated by KAT2A/GCN5 under conditions of high nutrients, leading to inactivation of PPARGC1A. Deacetylated by SIRT1 in low nutrients/high NAD conditions, leading to its activation. Post-translationally, ubiquitinated. Ubiquitination by RNF34 induces proteasomal degradation.

It localises to the nucleus. The protein localises to the PML body. In terms of biological role, transcriptional coactivator for steroid receptors and nuclear receptors. Greatly increases the transcriptional activity of PPARG and thyroid hormone receptor on the uncoupling protein promoter. Can regulate key mitochondrial genes that contribute to the program of adaptive thermogenesis. Plays an essential role in metabolic reprogramming in response to dietary availability through coordination of the expression of a wide array of genes involved in glucose and fatty acid metabolism. Acts as a key regulator of gluconeogenesis: stimulates hepatic gluconeogenesis by increasing the expression of gluconeogenic enzymes, and acting together with FOXO1 to promote the fasting gluconeogenic program. Induces the expression of PERM1 in the skeletal muscle in an ESRRA-dependent manner. Also involved in the integration of the circadian rhythms and energy metabolism. Required for oscillatory expression of clock genes, such as BMAL1 and NR1D1, through the coactivation of RORA and RORC, and metabolic genes, such as PDK4 and PEPCK. This chain is Peroxisome proliferator-activated receptor gamma coactivator 1-alpha (Ppargc1a), found in Rattus norvegicus (Rat).